The primary structure comprises 335 residues: Fructose-1,6-bisphosphatase class 1 (335 aa).

Mg(2+) contacts are provided by Glu-92, Asp-114, Leu-116, and Asp-117. Substrate is bound by residues 117 to 120 (DGSS) and Asn-209. Mg(2+) is bound at residue Glu-281.

This sequence belongs to the FBPase class 1 family. In terms of assembly, homotetramer. Requires Mg(2+) as cofactor.

Its subcellular location is the cytoplasm. It catalyses the reaction beta-D-fructose 1,6-bisphosphate + H2O = beta-D-fructose 6-phosphate + phosphate. It participates in carbohydrate biosynthesis; gluconeogenesis. This Nitrosococcus oceani (strain ATCC 19707 / BCRC 17464 / JCM 30415 / NCIMB 11848 / C-107) protein is Fructose-1,6-bisphosphatase class 1.